The following is a 169-amino-acid chain: Flagellar biosynthetic protein FliU (169 aa).

Belongs to the FliB family.

Functionally, required for the secretion of flagellin and expression of motility. This is Flagellar biosynthetic protein FliU (fliU) from Salmonella muenchen.